Here is a 176-residue protein sequence, read N- to C-terminus: Immunity factor for TNT homolog (176 aa).

Interacts with the tuberculosis necrotizing toxin (TNT) homolog, the C-terminal domain of the outer membrane channel protein CpnT.

Functionally, antitoxin for tuberculosis necrotizing toxin (TNT) homolog. Acts by binding directly to TNT, which inhibits NAD(+) glycohydrolase activity of TNT and protects M.bovis from self-poisoning. This chain is Immunity factor for TNT homolog, found in Mycobacterium bovis (strain BCG / Pasteur 1173P2).